The following is a 142-amino-acid chain: Large ribosomal subunit protein uL11 (142 aa).

It belongs to the universal ribosomal protein uL11 family. As to quaternary structure, part of the ribosomal stalk of the 50S ribosomal subunit. Interacts with L10 and the large rRNA to form the base of the stalk. L10 forms an elongated spine to which L12 dimers bind in a sequential fashion forming a multimeric L10(L12)X complex. Post-translationally, one or more lysine residues are methylated.

In terms of biological role, forms part of the ribosomal stalk which helps the ribosome interact with GTP-bound translation factors. The chain is Large ribosomal subunit protein uL11 from Xylella fastidiosa (strain Temecula1 / ATCC 700964).